The following is a 142-amino-acid chain: 3-hydroxyacyl-[acyl-carrier-protein] dehydratase FabZ (142 aa).

Histidine 47 is an active-site residue.

Belongs to the thioester dehydratase family. FabZ subfamily.

The protein resides in the cytoplasm. It carries out the reaction a (3R)-hydroxyacyl-[ACP] = a (2E)-enoyl-[ACP] + H2O. Involved in unsaturated fatty acids biosynthesis. Catalyzes the dehydration of short chain beta-hydroxyacyl-ACPs and long chain saturated and unsaturated beta-hydroxyacyl-ACPs. This chain is 3-hydroxyacyl-[acyl-carrier-protein] dehydratase FabZ, found in Coxiella burnetii (strain RSA 331 / Henzerling II).